Here is a 498-residue protein sequence, read N- to C-terminus: NAD(P)H-quinone oxidoreductase subunit 2, chloroplastic (498 aa).

A run of 14 helical transmembrane segments spans residues 18–38, 51–71, 87–107, 111–131, 134–154, 168–188, 211–231, 244–264, 278–298, 306–326, 337–357, 379–399, 411–431, and 470–490; these read LTIL…VIDL, ISMV…GFFT, FFLL…ILCS, LAEF…LSCA, LVTI…LSGY, FLLM…LLYG, IIYL…SLFP, PTPV…ALFT, WHVA…LIAV, MLAF…LSAD, YTFI…LFGL, FSLV…GFFG, GLYS…YYYL, and IAMI…DPII.

This sequence belongs to the complex I subunit 2 family. As to quaternary structure, NDH is composed of at least 16 different subunits, 5 of which are encoded in the nucleus.

The protein localises to the plastid. Its subcellular location is the chloroplast thylakoid membrane. The enzyme catalyses a plastoquinone + NADH + (n+1) H(+)(in) = a plastoquinol + NAD(+) + n H(+)(out). It catalyses the reaction a plastoquinone + NADPH + (n+1) H(+)(in) = a plastoquinol + NADP(+) + n H(+)(out). In terms of biological role, NDH shuttles electrons from NAD(P)H:plastoquinone, via FMN and iron-sulfur (Fe-S) centers, to quinones in the photosynthetic chain and possibly in a chloroplast respiratory chain. The immediate electron acceptor for the enzyme in this species is believed to be plastoquinone. Couples the redox reaction to proton translocation, and thus conserves the redox energy in a proton gradient. In Adiantum capillus-veneris (Maidenhair fern), this protein is NAD(P)H-quinone oxidoreductase subunit 2, chloroplastic.